The following is a 291-amino-acid chain: Pyridoxal 5'-phosphate synthase subunit PdxS (291 aa).

Residue Asp-23 participates in D-ribose 5-phosphate binding. Lys-80 acts as the Schiff-base intermediate with D-ribose 5-phosphate in catalysis. Position 152 (Gly-152) interacts with D-ribose 5-phosphate. Arg-164 is a D-glyceraldehyde 3-phosphate binding site. D-ribose 5-phosphate is bound by residues Gly-213 and 234-235 (GS).

The protein belongs to the PdxS/SNZ family. In terms of assembly, in the presence of PdxT, forms a dodecamer of heterodimers.

The enzyme catalyses aldehydo-D-ribose 5-phosphate + D-glyceraldehyde 3-phosphate + L-glutamine = pyridoxal 5'-phosphate + L-glutamate + phosphate + 3 H2O + H(+). It participates in cofactor biosynthesis; pyridoxal 5'-phosphate biosynthesis. Catalyzes the formation of pyridoxal 5'-phosphate from ribose 5-phosphate (RBP), glyceraldehyde 3-phosphate (G3P) and ammonia. The ammonia is provided by the PdxT subunit. Can also use ribulose 5-phosphate and dihydroxyacetone phosphate as substrates, resulting from enzyme-catalyzed isomerization of RBP and G3P, respectively. The polypeptide is Pyridoxal 5'-phosphate synthase subunit PdxS (Clostridium acetobutylicum (strain ATCC 824 / DSM 792 / JCM 1419 / IAM 19013 / LMG 5710 / NBRC 13948 / NRRL B-527 / VKM B-1787 / 2291 / W)).